A 245-amino-acid polypeptide reads, in one-letter code: 1-(5-phosphoribosyl)-5-[(5-phosphoribosylamino)methylideneamino] imidazole-4-carboxamide isomerase (245 aa).

Catalysis depends on D12, which acts as the Proton acceptor. D131 (proton donor) is an active-site residue.

The protein belongs to the HisA/HisF family.

The protein resides in the cytoplasm. It carries out the reaction 1-(5-phospho-beta-D-ribosyl)-5-[(5-phospho-beta-D-ribosylamino)methylideneamino]imidazole-4-carboxamide = 5-[(5-phospho-1-deoxy-D-ribulos-1-ylimino)methylamino]-1-(5-phospho-beta-D-ribosyl)imidazole-4-carboxamide. It functions in the pathway amino-acid biosynthesis; L-histidine biosynthesis; L-histidine from 5-phospho-alpha-D-ribose 1-diphosphate: step 4/9. The polypeptide is 1-(5-phosphoribosyl)-5-[(5-phosphoribosylamino)methylideneamino] imidazole-4-carboxamide isomerase (Thermobifida fusca (strain YX)).